The following is a 98-amino-acid chain: Ubiquitin-related modifier 1 (98 aa).

Gly-98 bears the 1-thioglycine mark. Gly-98 participates in a covalent cross-link: Glycyl lysine isopeptide (Gly-Lys) (interchain with K-? in acceptor proteins).

The protein belongs to the URM1 family. Post-translationally, C-terminal thiocarboxylation occurs in 2 steps, it is first acyl-adenylated (-COAMP) via the hesA/moeB/thiF part of UBA4, then thiocarboxylated (-COSH) via the rhodanese domain of UBA4.

Its subcellular location is the cytoplasm. Its pathway is tRNA modification; 5-methoxycarbonylmethyl-2-thiouridine-tRNA biosynthesis. In terms of biological role, acts as a sulfur carrier required for 2-thiolation of mcm(5)S(2)U at tRNA wobble positions of cytosolic tRNA(Lys), tRNA(Glu) and tRNA(Gln). Serves as sulfur donor in tRNA 2-thiolation reaction by being thiocarboxylated (-COSH) at its C-terminus by the MOCS3 homolog UBA4. The sulfur is then transferred to tRNA to form 2-thiolation of mcm(5)S(2)U. Prior mcm(5) tRNA modification by the elongator complex is required for 2-thiolation. Also acts as a ubiquitin-like protein (UBL) that is covalently conjugated via an isopeptide bond to lysine residues of target proteins such as AHP1. The thiocarboxylated form serves as substrate for conjugation and oxidative stress specifically induces the formation of UBL-protein conjugates. The chain is Ubiquitin-related modifier 1 from Candida glabrata (strain ATCC 2001 / BCRC 20586 / JCM 3761 / NBRC 0622 / NRRL Y-65 / CBS 138) (Yeast).